We begin with the raw amino-acid sequence, 1323 residues long: Regulatory protein ADR1 (1323 aa).

At Ser54 the chain carries Phosphoserine. C2H2-type zinc fingers lie at residues 104-126 (FVCE…YRSH) and 132-155 (YPCG…QKIH). The tract at residues 175 to 216 (KARKNSASSVKFQTPTYGTPDNGNFLNRTTANTRRKASPEAN) is disordered. Residues 179 to 206 (NSASSVKFQTPTYGTPDNGNFLNRTTAN) are compositionally biased toward polar residues. Residues Thr188 and Thr193 each carry the phosphothreonine modification. Ser230 carries the post-translational modification Phosphoserine; by PKA; in vitro. Residue Ser258 is modified to Phosphoserine. Phosphothreonine is present on Thr259. Residues Ser299, Ser323, and Ser325 each carry the phosphoserine modification. Thr327 carries the phosphothreonine modification.

Phosphorylation at Ser-230 by cAMP-dependent protein kinase A does not affect DNA binding but appears to prevent transcription of ADH2 during glucose repression.

The protein resides in the nucleus. In terms of biological role, required for transcriptional activation of glucose-repressible alcohol dehydrogenase (ADH2). In Saccharomyces cerevisiae (strain ATCC 204508 / S288c) (Baker's yeast), this protein is Regulatory protein ADR1 (ADR1).